A 99-amino-acid polypeptide reads, in one-letter code: Bublin coiled-coil protein (99 aa).

The stretch at 34–71 forms a coiled coil; it reads LDQINSCLDDIEERNDALNGKLQELLESNRAARRDFRQ. Positions 66–78 are enriched in basic and acidic residues; sequence RRDFRQQITDHAD. The interval 66-99 is disordered; it reads RRDFRQQITDHADLPPPANDDDEDEQSRDAQKKD.

It belongs to the UPF0184 (EST00098) family.

It localises to the cell junction. The protein resides in the cytoplasm. Its subcellular location is the cytoskeleton. In terms of biological role, essential for intermediate filament organization in intestinal cells, interacts with intermediate filament and regulates intestinal lumen morphology. This is Bublin coiled-coil protein (bbln) from Danio rerio (Zebrafish).